Reading from the N-terminus, the 68-residue chain is Conotoxin PnMLKM-011 (68 aa).

The signal sequence occupies residues 1-17; the sequence is MGVVLFIFLVLFPLATL. Residues 18 to 51 constitute a propeptide that is removed on maturation; sequence QLDPDQPVERYAENKQLLNPDERRGIILHALGQR. Intrachain disulfides connect Cys53–Cys65, Cys54–Cys63, and Cys59–Cys66. Leu67 carries the post-translational modification Leucine amide.

The protein belongs to the conotoxin M superfamily. Expressed by the venom duct.

It is found in the secreted. This chain is Conotoxin PnMLKM-011, found in Conus pennaceus (Feathered cone).